Consider the following 428-residue polypeptide: MVRFESTDSLMLARQLPNKTVALILAGGRGSRLKDLTATRAKPAVHFGGKFRIIDFALSNCLNSGVRRIGVITQYQSHTLVQHIQRGWSFLNEEMNEFVDLLPAQQRLSTEQWYKGTADAVCQNLDIIRRYDAEYIVILAGDHIYKMDYSRMLLDHVEKGAECTVACIPVPISEGSEFGIMEVTADYQITAFYEKPANPPPIPGDPSNALASMGIYIFNADYLFKLLEEDNNTPGSSHDFGKDIIPQLTARKVVWAHPFDLSCVTSNAELPPYWRDVGTLDAYWRANLDLASVTPELDMYDRAWPIRTHMEPLPPAKFVQDRSGSHGMTMNSLVSGGCIVSGSVVVHSVLFPRVRVNSFCTIDSSLLLPDVHVGRSCRLRRCIIDRACHIPEGMVIGENADEDSARFYRSEGGVVLVTRDMLAKLEAK.

Alpha-D-glucose 1-phosphate is bound by residues Tyr114, Gly179, 194–195, and Ser212; that span reads EK.

It belongs to the bacterial/plant glucose-1-phosphate adenylyltransferase family. In terms of assembly, homotetramer.

The catalysed reaction is alpha-D-glucose 1-phosphate + ATP + H(+) = ADP-alpha-D-glucose + diphosphate. It functions in the pathway glycan biosynthesis; glycogen biosynthesis. Involved in the biosynthesis of ADP-glucose, a building block required for the elongation reactions to produce glycogen. Catalyzes the reaction between ATP and alpha-D-glucose 1-phosphate (G1P) to produce pyrophosphate and ADP-Glc. In Yersinia pseudotuberculosis serotype O:1b (strain IP 31758), this protein is Glucose-1-phosphate adenylyltransferase.